The primary structure comprises 107 residues: Disintegrin lebestatin (107 aa).

A signal peptide spans 1-20; the sequence is MIQVLLVIICLAVFPFQGSS. A propeptide spanning residues 21 to 64 is cleaved from the precursor; sequence KTLKSGNVNDYEVVNPGTVTGLPKGAVEEKHEPMKGNTLQKFPL. Cystine bridges form between Cys-65–Cys-74, Cys-70–Cys-93, Cys-71–Cys-98, and Cys-83–Cys-100. A Disintegrin domain is found at 65 to 105; sequence CTTGPCCRQCKLKPAGTTCWKTSRTSHYCTGKSCDCPSYPG. A Cell attachment site; atypical (KTS) motif is present at residues 85-87; it reads KTS. Residues 106 to 107 constitute a propeptide that is removed on maturation; the sequence is NG.

Monomer. Expressed by the venom gland.

It localises to the secreted. In terms of biological role, specifically interacts with the alpha-1/beta-1 integrin (ITGA1/ITGB1). Exhibits highly inhibitory effects on cell adhesion and cell migration to collagens I and IV. Also shows in vivo anti-angiogenic activity. This chain is Disintegrin lebestatin, found in Macrovipera lebetinus (Levantine viper).